The following is a 257-amino-acid chain: MPKRTGDILMSSPLSKFRRKLNFDSPYTSRAAAPTVQGIKRRSWTYRPMYRKPRMYRMYRSPDVPFGCEGPCKVQSYEQRDDVKHTGVVRCVSDVTRGSGITHRVGKRFCIKSIYILGKIWMDENIKKQNHTNQVMFFLVRDRRPYGTSPMDFGQVFNMFDNEPSTATVKNDLRDRYQVMRKFHATVVGGPSGMKEQCLLKRFFKVNTHVVYNHQEQAKYENHTENALLLYMACTHASNPVYATLKIRIYFYDAVTN.

The Bipartite nuclear localization signal motif lies at 3 to 20 (KRTGDILMSSPLSKFRRK). Residues 40–54 (KRRSWTYRPMYRKPR) carry the Nuclear localization signal motif. A zinc finger spans residues 68–85 (CEGPCKVQSYEQRDDVKH). The Nuclear export signal signature appears at 101-122 (ITHRVGKRFCIKSIYILGKIWM). The Bipartite nuclear localization signal motif lies at 201 to 248 (KRFFKVNTHVVYNHQEQAKYENHTENALLLYMACTHASNPVYATLKIR).

Belongs to the geminiviridae capsid protein family. As to quaternary structure, homomultimer. Binds to single-stranded and double-stranded viral DNA. Interacts (via nuclear localization signals) with host importin alpha-1a.

It localises to the virion. It is found in the host nucleus. In terms of biological role, encapsidates the viral genome into characteristic twinned ('geminate') particles. Binds the genomic viral ssDNA and shuttles it into and out of the cell nucleus. Plays a role in protection of the genome from degradation, virus acquisition and transmission by insect vectors, infectivity, and systemic movement. The CP of monopartite geminiviruses is absolutely essential for virus movement. This is Capsid protein from Solanum lycopersicum (Tomato).